Consider the following 3332-residue polypeptide: Nonribosomal peptide synthetase imqB (3332 aa).

Residues 230–622 (FSEQVKAHPG…IGRKDTQVKV (393 aa)) are adenylation 1. One can recognise a Carrier 1 domain in the interval 764–846 (GRITPQEKLL…DMARCITRVD (83 aa)). Residue Ser801 is modified to O-(pantetheine 4'-phosphoryl)serine. The tract at residues 886 to 1314 (DIYPCTPLQE…NCLTRKELHQ (429 aa)) is condensation 1. The interval 1336-1740 (EVSNTRPTAP…GRKDRQLKVR (405 aa)) is adenylation 2. The 75-residue stretch at 1880 to 1954 (AIATPKEEKL…EMAEKAAETG (75 aa)) folds into the Carrier 2 domain. Ser1915 is modified (O-(pantetheine 4'-phosphoryl)serine). The segment at 1992–2402 (EDIYPCTPLQ…CLSEIDTQQI (411 aa)) is condensation 2. The segment at 2422 to 2819 (AQQAREHPAT…GRKDTQVKIR (398 aa)) is adenylation 3. The Carrier 3 domain occupies 2963-3039 (EVATNDEAAV…DLASRIGRVE (77 aa)). Residue Ser3000 is modified to O-(pantetheine 4'-phosphoryl)serine. The thioesterase (TE) domain stretch occupies residues 3058–3323 (SSNPTLIQGQ…ETTRHIRDFC (266 aa)).

It belongs to the NRP synthetase family.

It participates in secondary metabolite biosynthesis. Nonribosomal peptide synthetase; part of the gene cluster that mediates the biosynthesis of imizoquins A to D, tripeptide-derived alkaloids that serve a protective role against oxidative stress that are essential for normal germination. ImqB is a canonical three-module NRPS that assembles the tripeptide backbone of the imizoquins via condensation of Trp, Tyr, and Leu-derived precursors. N-methylation by imqF and phenol oxidation by imqC, followed by cyclization via the FAD-dependent oxidase imqH carry out the three-step transformation of L-tyrosine into tetrahydroisoquinoline. Importantly, this sequence requires the presence of a free amine in the tyrosine moiety, indicating that isoquinoline formation occurs prior to peptide bond formation. The imidazolidin-4-one ring of imizoquins could form following additional oxidation of the methyl-derived bridgehead carbon by imqH. Lastly, O-methylation by imqG and leucine hydroxylation by imqE complete biosynthesis of the imizoquins. The protein is Nonribosomal peptide synthetase imqB of Aspergillus flavus (strain ATCC 200026 / FGSC A1120 / IAM 13836 / NRRL 3357 / JCM 12722 / SRRC 167).